We begin with the raw amino-acid sequence, 137 residues long: Small ribosomal subunit protein uS12 (137 aa).

The disordered stretch occupies residues 1 to 23; the sequence is MPTINQLVRKGRKSKSSKSDAPA. D102 carries the post-translational modification 3-methylthioaspartic acid.

It belongs to the universal ribosomal protein uS12 family. In terms of assembly, part of the 30S ribosomal subunit. Contacts proteins S8 and S17. May interact with IF1 in the 30S initiation complex.

With S4 and S5 plays an important role in translational accuracy. Functionally, interacts with and stabilizes bases of the 16S rRNA that are involved in tRNA selection in the A site and with the mRNA backbone. Located at the interface of the 30S and 50S subunits, it traverses the body of the 30S subunit contacting proteins on the other side and probably holding the rRNA structure together. The combined cluster of proteins S8, S12 and S17 appears to hold together the shoulder and platform of the 30S subunit. In Levilactobacillus brevis (strain ATCC 367 / BCRC 12310 / CIP 105137 / JCM 1170 / LMG 11437 / NCIMB 947 / NCTC 947) (Lactobacillus brevis), this protein is Small ribosomal subunit protein uS12.